We begin with the raw amino-acid sequence, 512 residues long: Respiratory nitrate reductase 1 beta chain (512 aa).

4Fe-4S ferredoxin-type domains follow at residues 7-35, 175-206, and 208-237; these read VGMV…SREG, TFMM…KREE, and GIVL…FNWK. The [4Fe-4S] cluster site is built by Cys16, Cys19, Cys22, Cys26, Cys184, Cys187, and Cys192. Residues Cys196, Cys217, and Cys223 each contribute to the [3Fe-4S] cluster site. 5 residues coordinate [4Fe-4S] cluster: Cys227, Cys244, Cys247, Cys259, and Cys263.

Dimer of heterotrimers each composed of an alpha, a beta and a gamma chain. Alpha and beta are catalytic chains; gamma chains are involved in binding the enzyme complex to the cytoplasmic membrane. Requires [4Fe-4S] cluster as cofactor. The cofactor is [3Fe-4S] cluster.

It localises to the cell membrane. The enzyme catalyses nitrate + a quinol = a quinone + nitrite + H2O. In terms of biological role, the nitrate reductase enzyme complex allows E.coli to use nitrate as an electron acceptor during anaerobic growth. The beta chain is an electron transfer unit containing four cysteine clusters involved in the formation of iron-sulfur centers. Electrons are transferred from the gamma chain to the molybdenum cofactor of the alpha subunit. The protein is Respiratory nitrate reductase 1 beta chain (narH) of Escherichia coli (strain K12).